Consider the following 602-residue polypeptide: MSKNKKLSLSGGDTTEKFIYKPKDLIWAKMKGFTPWPGMIVDPPLDLLSQQRRANTKCVFFFGSRNFAWIEENNIKPFEGPWKEELAKVSKPAAFRHAMTDIEKYIDDPAEVDEQVNKSCGAPNHATEADFDKIRDGLDSEEIVGEEATADGNNGVVAHVVGSPDEGDGLDVEINADSSASPVTSPAVTTKAAGKRTPKAKSVAATSVKSTKGSAKSAQKRRTSAQQSPSGPSNAKRGKRDVSGEALQDADEASSTPTGRRRVETDALLASIAAKRAPNAIALLDRPVVTRPEAQVIDMSSRSNTLADRDIVPSEQTFGFLGLGMMGSTIVKDLIYTGHKVVVWNRTIDKCQPFAEAGAEVKDTPMDVVEAADVIFCCVSDPKGAKDLVFGNCGVLQLKDLNNKAYVEMSTIDPDTSLDIGEGIKQCNGRYLEAQIHGSRQEAAEGMLIILAGGDRSVFEECHSCFKTIAKNTFFLGNIGNACKVNLILQTILGVSLVGLAEALALADRFSISLNDIIDIFDLTSMKSPMLLAKGKEMAKGDFNPQQPLSHMQRDLRLVLNMAENLDQSMPVTSITNEVFKHTKRLGYSEHDSSAVFVRSRF.

Serine 8 and serine 10 each carry phosphoserine. One can recognise a PWWP domain in the interval 22–81; the sequence is PKDLIWAKMKGFTPWPGMIVDPPLDLLSQQRRANTKCVFFFGSRNFAWIEENNIKPFEGP. The segment at 162–262 is disordered; that stretch reads GSPDEGDGLD…ASSTPTGRRR (101 aa). 3 stretches are compositionally biased toward polar residues: residues 176 to 188, 204 to 217, and 224 to 233; these read ADSS…SPAV, AATS…SAKS, and SAQQSPSGPS. Serine 224, serine 228, and serine 243 each carry phosphoserine. Residues 309-602 are dehydrogenase domain; it reads RDIVPSEQTF…SSAVFVRSRF (294 aa). Residues 319–333, threonine 411, and arginine 554 contribute to the NAD(+) site; that span reads GFLG…IVKD.

It belongs to the HIBADH-related family. NP60 subfamily. Binds to mononucleosomes. Interacts with male-specific lethal (MSL) histone acetyltransferase complex at least composed of mof, msl-1, msl-2 and msl-3.

The protein resides in the chromosome. Functionally, nucleosome-destabilizing factor that is recruited to genes during transcriptional activation and colocalizes with a subset of trimethylated 'Lys-36' histone H3 (H3K36me3)-enriched regions. Binds DNA (in vitro). Facilitates Pol II transcription through nucleosomes. Facilitates male-specific lethal (MSL) histone acetyltransferase complex targeting to active genes on the X chromosome. Stimulates the acetylation of 'Lys-56' of nucleosomal histone H3 (H3K56ac) by nej. May have oxidoreductase activity. The sequence is that of Cytokine-like nuclear factor N-PAC from Drosophila melanogaster (Fruit fly).